Reading from the N-terminus, the 360-residue chain is SUN domain-containing protein 3 (360 aa).

The span at 1–10 (MSGRPNSRGS) shows a compositional bias: polar residues. Residues 1–39 (MSGRPNSRGSSRLFRAPSEDASSGSSGSAVLPQEENPNA) are disordered. At 1 to 47 (MSGRPNSRGSSRLFRAPSEDASSGSSGSAVLPQEENPNASGLTRSWK) the chain is on the nuclear side. Residues 48-67 (AVMGMVFILTLLLLGFINHM) traverse the membrane as a helical segment. Residues 68–360 (KLKEKAFPQK…RVHGTPKDDS (293 aa)) are Perinuclear space-facing. The stretch at 103–142 (KEQLELLKKESQTLENNFREILFLIEQIDVLKALLRDMQD) forms a coiled coil. Positions 196-357 (GASVVEAGTS…YRFRVHGTPK (162 aa)) constitute an SUN domain.

Self-associates. Interacts with SYNE1 and SPAG4/SUN4. Proposed to form a spermatogenesis-specific LINC complex with SYNE1 during sperm head formation possibly implicating a SUN domain-based heterotrimer with SPAG4/SUN4 associating with SYNE1.

The protein resides in the membrane. The protein localises to the nucleus envelope. It localises to the nucleus inner membrane. Its function is as follows. As a probable component of the LINC (LInker of Nucleoskeleton and Cytoskeleton) complex, involved in the connection between the nuclear lamina and the cytoskeleton. The nucleocytoplasmic interactions established by the LINC complex play an important role in the transmission of mechanical forces across the nuclear envelope and in nuclear movement and positioning. May be involved in nuclear remodeling during sperm head formation in spermatogenesis. A probable SUN3:SYNE1 LINC complex may tether spermatid nuclei to posterior cytoskeletal structures such as the manchette. The polypeptide is SUN domain-containing protein 3 (SUN3) (Bos taurus (Bovine)).